A 120-amino-acid chain; its full sequence is Large ribosomal subunit protein uL22 (120 aa).

Belongs to the universal ribosomal protein uL22 family. As to quaternary structure, part of the 50S ribosomal subunit.

This protein binds specifically to 23S rRNA; its binding is stimulated by other ribosomal proteins, e.g. L4, L17, and L20. It is important during the early stages of 50S assembly. It makes multiple contacts with different domains of the 23S rRNA in the assembled 50S subunit and ribosome. In terms of biological role, the globular domain of the protein is located near the polypeptide exit tunnel on the outside of the subunit, while an extended beta-hairpin is found that lines the wall of the exit tunnel in the center of the 70S ribosome. The chain is Large ribosomal subunit protein uL22 from Corynebacterium efficiens (strain DSM 44549 / YS-314 / AJ 12310 / JCM 11189 / NBRC 100395).